Here is a 246-residue protein sequence, read N- to C-terminus: tRNA (guanine-N(1)-)-methyltransferase (246 aa).

S-adenosyl-L-methionine contacts are provided by residues G114 and 134–139; that span reads IGDYIL.

Belongs to the RNA methyltransferase TrmD family. As to quaternary structure, homodimer.

Its subcellular location is the cytoplasm. It carries out the reaction guanosine(37) in tRNA + S-adenosyl-L-methionine = N(1)-methylguanosine(37) in tRNA + S-adenosyl-L-homocysteine + H(+). In terms of biological role, specifically methylates guanosine-37 in various tRNAs. This Coxiella burnetii (strain RSA 331 / Henzerling II) protein is tRNA (guanine-N(1)-)-methyltransferase.